The primary structure comprises 234 residues: Sugar fermentation stimulation protein A (234 aa).

The segment at residues 201-220 (LLSEAQQRGVEILAYKAELS) is a DNA-binding region (H-T-H motif).

It belongs to the SfsA family.

Binds to DNA non-specifically. Could be a regulatory factor involved in maltose metabolism. The chain is Sugar fermentation stimulation protein A from Escherichia coli O7:K1 (strain IAI39 / ExPEC).